We begin with the raw amino-acid sequence, 775 residues long: MPTTVSGPIKSVPGERRDRQVHTGASATTGMDIARSLRAEARRANERRLLVLAGDPDRTRERAATALDLADVPSAETTVVGPEPFLDCEHHDQSRAEELLGRTRTAVVFDAHEELRPDAVGRTVGAVDGGGLYVLLAPPLETWPEERDGFDASLAVPPFGVEDVSGHFRRRFVETLRAHRGIAIVDVDRGTVEQDGLTDPPPSRPVPSPTPPTDAWFRSETYAQCLTDDQRDAVQAFESLQTAGEAVVVEADRGRGKSSAAGLAAGNLAAADRDVLVTGPQYRSAAEVFVRAAHLLEAFGVDFTRDRSSDPQRLDVAGAGCVRYAPPDEAASLPDGPDVVIVDEAAALPVRRLEQFLDAPAVTFATTVHGYEGAGRGFSVRFRDRLAESDLAVTDVSMTTPIRYSDADPVEVWAFRALLLDARPPVDQLIEDATPETVEYRQLSAADLLADTHLLREVFGLLVLAHYRTEPSDLARLLDAPNLTVRALTHEGHVVAVALLAQEGGLSASTRATMYEGGRVRGNMLPDVLSTQLRDEAAGVPVGQRVLRIATHAAVRSRGLGSKLLSEIRAEFADHVDWVGVSYGATPELVRFWADNGYNTVHLATSRNATSGEYSVVMLDPCSDDAAALAARHREWFQDRIAAVLSDPLDDCDPDVVRAVLRATDGERPVSLSEWEWRLVAGVPGGASVLDTNPKPFRDLTRRHLSHPADATALSPREERLLVRKVLQAHPWSTVTEELAFVSERECMRTLGGIVERLTRLYGDPWVQEELDRHL.

Disordered stretches follow at residues 1–33 (MPTT…GMDI) and 191–215 (TVEQ…PTDA). A compositionally biased stretch (pro residues) spans 199–212 (DPPPSRPVPSPTPP). Residues glutamine 230, 254 to 263 (GRGKSSAAGL), and arginine 403 contribute to the ATP site. The 186-residue stretch at 438–623 (VEYRQLSAAD…YSVVMLDPCS (186 aa)) folds into the N-acetyltransferase domain. Acetyl-CoA-binding positions include 549 to 551 (IAT), 556 to 562 (RSRGLGS), and glutamate 588.

This sequence belongs to the RNA cytidine acetyltransferase family. TmcA subfamily.

The protein resides in the cytoplasm. The catalysed reaction is cytidine(34) in elongator tRNA(Met) + acetyl-CoA + ATP + H2O = N(4)-acetylcytidine(34) in elongator tRNA(Met) + ADP + phosphate + CoA + H(+). Catalyzes the formation of N(4)-acetylcytidine (ac(4)C) at the wobble position of tRNA(Met), by using acetyl-CoA as an acetyl donor and ATP (or GTP). The protein is tRNA(Met) cytidine acetyltransferase TmcA of Haloarcula marismortui (strain ATCC 43049 / DSM 3752 / JCM 8966 / VKM B-1809) (Halobacterium marismortui).